A 275-amino-acid polypeptide reads, in one-letter code: MGIRTYRPYTPGTRQASVSDFADITKPKPEKSLTTYKHNKKGRNNRGVITSRHRGGGHKRLYRIVDFKRDKYGVPAKVAAIEYDPNRNARIALLFYQDGEKRYILAPAGITVGTEVISGEDSPFEVGNALPLYKIPLGTEVHNIELVAGKGGQMVRAAGAAAQVVAKEGDYVTLRLPSKEVRMVRKECYATIGRVGNTEARNIKLGKAGRTRHLGRRPHVRGSVMNPVDHPHGGGEGRAPVGRSGPMTPWGKPALGAKTRNKKKASSRLIVRRRR.

2 disordered regions span residues 1–55 and 218–275; these read MGIR…RHRG and PHVR…RRRR. A compositionally biased stretch (basic residues) spans 259–275; it reads TRNKKKASSRLIVRRRR.

Belongs to the universal ribosomal protein uL2 family. In terms of assembly, part of the 50S ribosomal subunit. Forms a bridge to the 30S subunit in the 70S ribosome.

In terms of biological role, one of the primary rRNA binding proteins. Required for association of the 30S and 50S subunits to form the 70S ribosome, for tRNA binding and peptide bond formation. It has been suggested to have peptidyltransferase activity; this is somewhat controversial. Makes several contacts with the 16S rRNA in the 70S ribosome. The chain is Large ribosomal subunit protein uL2 from Crocosphaera subtropica (strain ATCC 51142 / BH68) (Cyanothece sp. (strain ATCC 51142)).